A 541-amino-acid polypeptide reads, in one-letter code: Chaperonin GroEL 2 (541 aa).

Residues 29 to 32 (TLGP), 86 to 90 (DGTTT), glycine 413, 476 to 478 (NAA), and aspartate 492 each bind ATP.

This sequence belongs to the chaperonin (HSP60) family. In terms of assembly, forms a cylinder of 14 subunits composed of two heptameric rings stacked back-to-back. Interacts with the co-chaperonin GroES.

It localises to the secreted. The protein localises to the capsule. Its subcellular location is the cell surface. The protein resides in the cell wall. It catalyses the reaction ATP + H2O + a folded polypeptide = ADP + phosphate + an unfolded polypeptide.. Together with its co-chaperonin GroES, plays an essential role in assisting protein folding. The GroEL-GroES system forms a nano-cage that allows encapsulation of the non-native substrate proteins and provides a physical environment optimized to promote and accelerate protein folding. The polypeptide is Chaperonin GroEL 2 (Mycobacterium sp. (strain KMS)).